We begin with the raw amino-acid sequence, 133 residues long: Ribonuclease P protein component (133 aa).

The disordered stretch occupies residues 114–133 (RSRPTPEEKSEPAGVDSTDA).

It belongs to the RnpA family. As to quaternary structure, consists of a catalytic RNA component (M1 or rnpB) and a protein subunit.

The catalysed reaction is Endonucleolytic cleavage of RNA, removing 5'-extranucleotides from tRNA precursor.. Its function is as follows. RNaseP catalyzes the removal of the 5'-leader sequence from pre-tRNA to produce the mature 5'-terminus. It can also cleave other RNA substrates such as 4.5S RNA. The protein component plays an auxiliary but essential role in vivo by binding to the 5'-leader sequence and broadening the substrate specificity of the ribozyme. This Pseudomonas syringae pv. tomato (strain ATCC BAA-871 / DC3000) protein is Ribonuclease P protein component.